Consider the following 278-residue polypeptide: MVGSRTWCESEMLFVQPDAGTKEELYYRVTPKPGQTQANFNWTPHKVRFHDARPQRDSFDLNTHGFTFVEDAISPQLIERIRADDTAAVEGDYFASVAALVKRVTGADHVVCFSPYTRKENSEKGIFGQPARTVHCDHTPAAAIELTHKLCGEDAVRLLQSRFRAFSVWRPLVEPVLDWPLAVVDGRTIAPDDLHPVHWLRYEKKDTEPPFQLSFSETQKWYYLSRQRSDEVSIVKNYDSEVVPSPRSAHCAFKHPFVPKDAPPRESIDVRCLVFGGR.

It belongs to the asaB hydroxylase/desaturase family.

It carries out the reaction asnovolin A + 2-oxoglutarate + 2 O2 = fumigatonoid A + succinate + CO2. Its pathway is secondary metabolite biosynthesis; terpenoid biosynthesis. In terms of biological role, fe(II)/2-oxoglutarate-dependent dioxygenase; part of the gene cluster that mediates the biosynthesis of novofumigatonin, a heavily oxygenated meroterpenoid containing a unique orthoester moiety. The first step of the pathway is the synthesis of 3,5-dimethylorsellinic acid (DMOA) by the polyketide synthase nvfA via condensation of one acetyl-CoA starter unit with 3 malonyl-CoA units and 2 methylations. DMOA is then converted to farnesyl-DMOA by the farnesyltransferase nvfB. Epoxydation by FAD-dependent monooxygenase nvfK, followed by a protonation-initiated cyclization catalyzed by the terpene cyclase nvfL leads to the production of asnavolin H. The short chain dehydrogenase nvfC then as a 3-OH dehydrogenase of asnovolin H to yield chemesin D. There are two branches to synthesize asnovolin A from chemesin D. In one branch, chemesin D undergoes Baeyer-Villiger oxidation by nvfH, methylation by nvfJ, and enoyl reduction by the nvfM D enoylreductase that reduces the double bond between C-5'and C-6', to form respectively asnovolin I, asnovolin K, and asnovolin A. In the other branch, the methylation precedes the Baeyer-Villiger oxidation and the enoyl reduction to yield asnovolin A via the asnovolin J intermediate. Asnovolin A is further converted to fumigatonoid A by the Fe(II)/2-oxoglutarate-dependent dioxygenase nvfI that catalyzes an endoperoxidation reaction. The alpha/beta hydrolase nvfD then acts as an epimerase that converts fumigatonoid A to its C-5' epimer, which then undergoes spontaneous or nvfD-catalyzed lactonization. The following step utilizes the ketoreductase nvfG to produce fumigatonoid B. The dioxygenase nvfE further converts fumigatonoid B into fumigatonoid C. Finally the Fe(II)/2-oxoglutarate-dependent dioxygenase nvfF catalyzes two rounds of oxidation to transform fumigatonoid C into the end product, novofumigatonin A. In Aspergillus novofumigatus (strain IBT 16806), this protein is Fe(II)/2-oxoglutarate-dependent dioxygenase nvfI.